Reading from the N-terminus, the 651-residue chain is Aspartate--tRNA ligase, mitochondrial (651 aa).

A mitochondrion-targeting transit peptide spans 1–44 (MFCWLSRLCGELSTPTRRTTQLIWSSAARSMVLSSQRIPELSSF). Position 216 is a phosphothreonine (Thr-216). A Phosphoserine modification is found at Ser-239. An aspartate region spans residues 241 to 244 (QQFK). Arg-263 provides a ligand contact to L-aspartate. Residue 263–265 (RDE) coordinates ATP. Lys-379 carries the post-translational modification N6-acetyllysine. Glu-532 contacts ATP. Arg-539 contacts L-aspartate. Residue 581-584 (GLDR) participates in ATP binding.

It belongs to the class-II aminoacyl-tRNA synthetase family. Type 1 subfamily. In terms of assembly, homodimer.

It is found in the mitochondrion matrix. The protein localises to the mitochondrion membrane. The enzyme catalyses tRNA(Asp) + L-aspartate + ATP = L-aspartyl-tRNA(Asp) + AMP + diphosphate. Functionally, catalyzes the attachment of aspartate to tRNA(Asp) in a two-step reaction: aspartate is first activated by ATP to form Asp-AMP and then transferred to the acceptor end of tRNA(Asp). The sequence is that of Aspartate--tRNA ligase, mitochondrial (DARS2) from Bos taurus (Bovine).